The following is a 370-amino-acid chain: MKIEAISTTIVDVPTRRPLQMSFTTVHKQSYVIVQVTAGGLVGIGEGGSVGGPTWGSESAETIKVIIDNYLAPLLIGKDASNLSEARALMDRAVTGNLSAKAAIDIALHDLKARALNLSIADLIGGTMRKSIPIAWTLASGDTARDIDSALEMIEARRHNRFKVKLGARTPAQDLEHIRSIVKAVGDKASVRVDVNQGWDEQTASIWIPRLEEAGVELVEQPVPRANFGALRRLTEQNGVAILADESLSSLSSAFELARDRAVDAFSLKLCNMGGIANTLKVAAIAEAAGISSYGGTMLDSTVGTAAALHVYATLPSLPYGCELIGPWVLSDRLTQQDLEIKDFEVHLPVGSGLGVDLDHDKVRHYTRAA.

Lysine 165 serves as the catalytic Proton acceptor. Mn(2+) is bound by residues aspartate 194, glutamate 220, and aspartate 245. Glutamate 323 (proton donor) is an active-site residue.

Belongs to the mandelate racemase/muconate lactonizing enzyme family. Mn(2+) is required as a cofactor.

It catalyses the reaction 2-[(2R)-2-chloro-2,5-dihydro-5-oxofuryl]acetate = 3-chloro-cis,cis-muconate + H(+). The protein operates within aromatic compound metabolism; 3-chlorocatechol degradation. This Delftia acidovorans (Pseudomonas acidovorans) protein is Chloromuconate cycloisomerase (tfdD).